Reading from the N-terminus, the 197-residue chain is RIP-like protein (197 aa).

The tract at residues 1–20 (MNSTQSPVYRTSVEQKRHAQ) is disordered. The RIP-type zinc finger occupies 122–191 (CPVCQIKNLR…GQLYDMCGSC (70 aa)).

The protein is RIP-like protein (Ripalpha) of Drosophila melanogaster (Fruit fly).